Reading from the N-terminus, the 205-residue chain is Small ribosomal subunit protein uS4 (205 aa).

Over residues 1 to 16 the composition is skewed to basic and acidic residues; it reads MSKRESSKYKIDRRMG. Positions 1–46 are disordered; it reads MSKRESSKYKIDRRMGENIWGRPKSPVNRREYGPGQHGQRRKSKLS. Residues 94 to 157 form the S4 RNA-binding domain; that stretch reads SRLDAIVYRA…KQLVSVLESV (64 aa).

It belongs to the universal ribosomal protein uS4 family. As to quaternary structure, part of the 30S ribosomal subunit. Contacts protein S5. The interaction surface between S4 and S5 is involved in control of translational fidelity.

One of the primary rRNA binding proteins, it binds directly to 16S rRNA where it nucleates assembly of the body of the 30S subunit. Functionally, with S5 and S12 plays an important role in translational accuracy. This is Small ribosomal subunit protein uS4 from Sinorhizobium fredii (strain NBRC 101917 / NGR234).